The sequence spans 1690 residues: Lysine-specific demethylase 5A (1690 aa).

Residues 19 to 60 (CPVFEPSWEEFTDPLSFIGRIRPLAEKTGICKIRPPKDWQPP) form the JmjN domain. The ARID domain maps to 84 to 174 (TRVRLDFLDQ…ILYPYELFQS (91 aa)). Residue lysine 191 forms a Glycyl lysine isopeptide (Lys-Gly) (interchain with G-Cter in SUMO2) linkage. Serine 204 carries the phosphoserine modification. Residues 293–343 (LYVCMFCGRGNNEDKLLLCDGCDDSYHTFCLIPPLPDVPKGDWRCPKCVAE) form a PHD-type 1 zinc finger. Tyrosine 409 serves as a coordination point for 2-oxoglutarate. Positions 419 to 423 (GSGFP) match the GSGFP motif motif. In terms of domain architecture, JmjC spans 437–603 (EYALSGWNLN…IGRQCVNHYR (167 aa)). Fe cation is bound by residues histidine 483 and glutamate 485. 2-oxoglutarate-binding residues include serine 491, asparagine 493, and lysine 501. Histidine 571 contributes to the Fe cation binding site. The C5HC2 zinc finger occupies 676–728 (CSACRTTCFLSALTCSCNPERLVCLYHPTDLCPCPMQKKCLRYRYPLEDLPSL). A Glycyl lysine isopeptide (Lys-Gly) (interchain with G-Cter in SUMO2) cross-link involves residue lysine 1007. The residue at position 1111 (serine 1111) is a Phosphoserine. The segment at 1161-1218 (VKFCICRKTASGFMLQCELCKDWFHNSCVPLPKSSSQKKGSSWQAKEVKFLCPLCMRS) adopts a PHD-type 2 zinc-finger fold. Disordered regions lie at residues 1327 to 1348 (SVSS…SDED) and 1407 to 1433 (KSCS…LEPP). A phosphoserine mark is found at serine 1330 and serine 1331. Over residues 1337 to 1348 (DYDDEETDSDED) the composition is skewed to acidic residues. The residue at position 1343 (threonine 1343) is a Phosphothreonine. Serine 1345 is subject to Phosphoserine. 2 positions are modified to phosphoserine: serine 1438 and serine 1488. Basic and acidic residues-rich tracts occupy residues 1490–1503 (EEKP…DSSE) and 1520–1530 (GKQKSKELKKM). 2 disordered regions span residues 1490–1509 (EEKP…RKRK) and 1516–1543 (LFGE…LGAD). Residue tyrosine 1595 is modified to Phosphotyrosine. 2 positions are modified to phosphoserine: serine 1598 and serine 1603. A PHD-type 3 zinc finger spans residues 1607–1661 (NAVCAAQNCQRPCKDKVDWVQCDGGCDEWFHQVCVGVSPEMAENEDYICINCAKK). Residues 1623 to 1690 (VDWVQCDGGC…LPMEDLKETS (68 aa)) are interaction with LMO2. Position 1666 is a phosphoserine (serine 1666).

It belongs to the JARID1 histone demethylase family. Interacts with SUZ12; the interaction is direct. Interacts with the viral protein-binding domain of RB1. Interacts with ESR1, MYC, MYCN and LMO2. Interacts with HDAC1; this interaction impairs histone deacetylation by HDAC1. Interacts with BMAL1 and CLOCK. Interacts (via PHD-type 1 zinc finger) with histone H3 unmodified at 'Lys-4' and (via PHD-type 3 zinc finger) with histone H3 di- and trimethylated at 'Lys-4'. The cofactor is Fe(2+).

The protein resides in the nucleus. It localises to the nucleolus. It carries out the reaction N(6),N(6),N(6)-trimethyl-L-lysyl(4)-[histone H3] + 3 2-oxoglutarate + 3 O2 = L-lysyl(4)-[histone H3] + 3 formaldehyde + 3 succinate + 3 CO2. Its activity is regulated as follows. The inhibitors KDOAM-25, CPI-455 and others inhibits its demethylase activity, resulting to cell growth arrest in cancer cells. Its function is as follows. Histone demethylase that specifically demethylates 'Lys-4' of histone H3, thereby playing a central role in histone code. Does not demethylate histone H3 'Lys-9', H3 'Lys-27', H3 'Lys-36', H3 'Lys-79' or H4 'Lys-20'. Demethylates trimethylated and dimethylated but not monomethylated H3 'Lys-4'. Regulates specific gene transcription through DNA-binding on 5'-CCGCCC-3' motif. May stimulate transcription mediated by nuclear receptors. Involved in transcriptional regulation of Hox proteins during cell differentiation. May participate in transcriptional repression of cytokines such as CXCL12. Plays a role in the regulation of the circadian rhythm and in maintaining the normal periodicity of the circadian clock. In a histone demethylase-independent manner, acts as a coactivator of the CLOCK-BMAL1-mediated transcriptional activation of PER1/2 and other clock-controlled genes and increases histone acetylation at PER1/2 promoters by inhibiting the activity of HDAC1. Seems to act as a transcriptional corepressor for some genes such as MT1F and to favor the proliferation of cancer cells. In Homo sapiens (Human), this protein is Lysine-specific demethylase 5A.